A 315-amino-acid chain; its full sequence is S-methyl-5'-thioadenosine phosphorylase (315 aa).

Residues Ser22, 65–66 (RH), and 98–99 (SA) each bind phosphate. Met205 is a substrate binding site. Residue Ser206 coordinates phosphate. 229 to 231 (DYD) provides a ligand contact to substrate.

The protein belongs to the PNP/MTAP phosphorylase family. MTAP subfamily. Homotrimer.

The protein resides in the cytoplasm. Its subcellular location is the nucleus. The catalysed reaction is S-methyl-5'-thioadenosine + phosphate = 5-(methylsulfanyl)-alpha-D-ribose 1-phosphate + adenine. Its pathway is amino-acid biosynthesis; L-methionine biosynthesis via salvage pathway; S-methyl-5-thio-alpha-D-ribose 1-phosphate from S-methyl-5'-thioadenosine (phosphorylase route): step 1/1. Functionally, catalyzes the reversible phosphorylation of S-methyl-5'-thioadenosine (MTA) to adenine and 5-methylthioribose-1-phosphate. Involved in the breakdown of MTA, a major by-product of polyamine biosynthesis. Responsible for the first step in the methionine salvage pathway after MTA has been generated from S-adenosylmethionine. Has broad substrate specificity with 6-aminopurine nucleosides as preferred substrates. The protein is S-methyl-5'-thioadenosine phosphorylase of Mycosarcoma maydis (Corn smut fungus).